A 540-amino-acid polypeptide reads, in one-letter code: CTP synthase (540 aa).

Positions 1–270 (MNNLTSTKFI…DTQILKHFNI (270 aa)) are amidoligase domain. Residue serine 18 coordinates CTP. Serine 18 is a binding site for UTP. ATP-binding positions include 19-24 (SLGKGL) and aspartate 76. Positions 76 and 144 each coordinate Mg(2+). Residues 151-153 (DIE), 191-196 (KTKPTQ), and lysine 227 contribute to the CTP site. UTP contacts are provided by residues 191 to 196 (KTKPTQ) and lysine 227. The 243-residue stretch at 295-537 (TIAIIGKYIK…VQASLNYQET (243 aa)) folds into the Glutamine amidotransferase type-1 domain. Glycine 356 provides a ligand contact to L-glutamine. Cysteine 383 acts as the Nucleophile; for glutamine hydrolysis in catalysis. Residues 384-387 (MGMQ), glutamate 407, and arginine 462 each bind L-glutamine. Residues histidine 510 and glutamate 512 contribute to the active site.

The protein belongs to the CTP synthase family. In terms of assembly, homotetramer.

It carries out the reaction UTP + L-glutamine + ATP + H2O = CTP + L-glutamate + ADP + phosphate + 2 H(+). It catalyses the reaction L-glutamine + H2O = L-glutamate + NH4(+). The enzyme catalyses UTP + NH4(+) + ATP = CTP + ADP + phosphate + 2 H(+). It functions in the pathway pyrimidine metabolism; CTP biosynthesis via de novo pathway; CTP from UDP: step 2/2. Allosterically activated by GTP, when glutamine is the substrate; GTP has no effect on the reaction when ammonia is the substrate. The allosteric effector GTP functions by stabilizing the protein conformation that binds the tetrahedral intermediate(s) formed during glutamine hydrolysis. Inhibited by the product CTP, via allosteric rather than competitive inhibition. In terms of biological role, catalyzes the ATP-dependent amination of UTP to CTP with either L-glutamine or ammonia as the source of nitrogen. Regulates intracellular CTP levels through interactions with the four ribonucleotide triphosphates. The chain is CTP synthase from Ehrlichia ruminantium (strain Welgevonden).